Consider the following 26-residue polypeptide: Unknown protein 16 (26 aa).

The segment at 1–26 is disordered; that stretch reads AINSESGVRSVVPQPCNALPNQGPEK.

The polypeptide is Unknown protein 16 (Pseudotsuga menziesii (Douglas-fir)).